We begin with the raw amino-acid sequence, 448 residues long: Probable glycine dehydrogenase (decarboxylating) subunit 1 (448 aa).

It belongs to the GcvP family. N-terminal subunit subfamily. As to quaternary structure, the glycine cleavage system is composed of four proteins: P, T, L and H. In this organism, the P 'protein' is a heterodimer of two subunits.

It carries out the reaction N(6)-[(R)-lipoyl]-L-lysyl-[glycine-cleavage complex H protein] + glycine + H(+) = N(6)-[(R)-S(8)-aminomethyldihydrolipoyl]-L-lysyl-[glycine-cleavage complex H protein] + CO2. Functionally, the glycine cleavage system catalyzes the degradation of glycine. The P protein binds the alpha-amino group of glycine through its pyridoxal phosphate cofactor; CO(2) is released and the remaining methylamine moiety is then transferred to the lipoamide cofactor of the H protein. The sequence is that of Probable glycine dehydrogenase (decarboxylating) subunit 1 from Exiguobacterium sibiricum (strain DSM 17290 / CCUG 55495 / CIP 109462 / JCM 13490 / 255-15).